The following is a 161-amino-acid chain: Bacterioferritin (161 aa).

The 145-residue stretch at M1–G145 folds into the Ferritin-like diiron domain. Residues E18 and E51 each coordinate Fe cation. M52 lines the heme b pocket. Fe cation is bound by residues H54, E94, E127, and H130.

Belongs to the bacterioferritin family. Homooligomer of 24 subunits, arranged as 12 dimers, that are packed together to form an approximately spherical molecule with a central cavity, in which large amounts of iron can be deposited. It depends on heme b as a cofactor.

It catalyses the reaction 4 Fe(2+) + O2 + 4 H(+) = 4 Fe(3+) + 2 H2O. It carries out the reaction Fe(2+)(in) = Fe(2+)(out). In terms of biological role, iron-storage protein, whose ferroxidase center binds Fe(2+), oxidizes it using dioxygen to Fe(3+), and participates in the subsequent Fe(3+) oxide mineral core formation within the central cavity of the BFR protein shell. The chain is Bacterioferritin (bfr) from Rhodobacter capsulatus (Rhodopseudomonas capsulata).